The chain runs to 284 residues: Large ribosomal subunit protein uL2 (284 aa).

A disordered region spans residues arginine 232–lysine 284. Residues aspartate 240–histidine 250 are compositionally biased toward basic and acidic residues. Residues lysine 264–lysine 284 show a composition bias toward basic residues.

The protein belongs to the universal ribosomal protein uL2 family. Part of the 50S ribosomal subunit. Forms a bridge to the 30S subunit in the 70S ribosome.

In terms of biological role, one of the primary rRNA binding proteins. Required for association of the 30S and 50S subunits to form the 70S ribosome, for tRNA binding and peptide bond formation. It has been suggested to have peptidyltransferase activity; this is somewhat controversial. Makes several contacts with the 16S rRNA in the 70S ribosome. This chain is Large ribosomal subunit protein uL2, found in Chlamydia felis (strain Fe/C-56) (Chlamydophila felis).